The following is a 338-amino-acid chain: Selenocysteine methyltransferase (338 aa).

In terms of domain architecture, Hcy-binding spans 1-327; the sequence is MSSPLITDFL…DTIRGIYKIL (327 aa). 3 residues coordinate Zn(2+): cysteine 245, cysteine 312, and cysteine 313.

In terms of assembly, monomer. The cofactor is Zn(2+). Present in all tissues tested.

The catalysed reaction is S-methyl-L-methionine + L-selenocysteine = Se-methyl-L-selenocysteine + L-methionine + H(+). Catalyzes the methylation of selenocysteine with S-methylmethionine as donor. Does not methylate cysteine. In Astragalus bisulcatus (Two-grooved milkvetch), this protein is Selenocysteine methyltransferase (SMTA).